The chain runs to 243 residues: 1-(5-phosphoribosyl)-5-[(5-phosphoribosylamino)methylideneamino] imidazole-4-carboxamide isomerase (243 aa).

Asp8 functions as the Proton acceptor in the catalytic mechanism. The active-site Proton donor is Asp130.

It belongs to the HisA/HisF family.

Its subcellular location is the cytoplasm. It carries out the reaction 1-(5-phospho-beta-D-ribosyl)-5-[(5-phospho-beta-D-ribosylamino)methylideneamino]imidazole-4-carboxamide = 5-[(5-phospho-1-deoxy-D-ribulos-1-ylimino)methylamino]-1-(5-phospho-beta-D-ribosyl)imidazole-4-carboxamide. It functions in the pathway amino-acid biosynthesis; L-histidine biosynthesis; L-histidine from 5-phospho-alpha-D-ribose 1-diphosphate: step 4/9. The sequence is that of 1-(5-phosphoribosyl)-5-[(5-phosphoribosylamino)methylideneamino] imidazole-4-carboxamide isomerase from Saccharophagus degradans (strain 2-40 / ATCC 43961 / DSM 17024).